A 420-amino-acid polypeptide reads, in one-letter code: Putative epoxide hydrolase (420 aa).

The protein belongs to the peptidase S33 family.

Its pathway is mycotoxin biosynthesis. Functionally, putative epoxide hydrolase; part of the fragmented gene cluster that mediates the biosynthesis of dothistromin (DOTH), a polyketide toxin very similar in structure to the aflatoxin precursor, versicolorin B. The first step of the pathway is the conversion of acetate to norsolorinic acid (NOR) and requires the fatty acid synthase subunits hexA and hexB, as well as the polyketide synthase pksA. PksA combines a hexanoyl starter unit and 7 malonyl-CoA extender units to synthesize the precursor NOR. The hexanoyl starter unit is provided to the acyl-carrier protein (ACP) domain by the fungal fatty acid synthase hexA/hexB. The second step is the conversion of NOR to averantin (AVN) and requires the norsolorinic acid ketoreductase nor1, which catalyzes the dehydration of norsolorinic acid to form (1'S)-averantin. The cytochrome P450 monooxygenase avnA then catalyzes the hydroxylation of AVN to 5'hydroxyaverantin (HAVN). The next step is performed by adhA that transforms HAVN to averufin (AVF). Averufin might then be converted to hydroxyversicolorone by cypX and avfA. Hydroxyversicolorone is further converted versiconal hemiacetal acetate (VHA) by moxY. VHA is then the substrate for the versiconal hemiacetal acetate esterase est1 to yield versiconal (VAL). Versicolorin B synthase vbsA then converts VAL to versicolorin B (VERB) by closing the bisfuran ring. Then, the activity of the versicolorin B desaturase verB leads to versicolorin A (VERA). DotB, a predicted chloroperoxidase, may perform epoxidation of the A-ring of VERA. Alternatively, a cytochrome P450, such as cypX or avnA could catalyze this step. It is also possible that another, uncharacterized, cytochrome P450 enzyme is responsible for this step. Opening of the epoxide could potentially be achieved by the epoxide hydrolase epoA. However, epoA seems not to be required for DOTH biosynthesis, but other epoxide hydrolases may have the ability to complement this hydrolysis. Alternatively, opening of the epoxide ring could be achieved non-enzymatically. The next step is the deoxygenation of ring A to yield the 5,8-dihydroxyanthraquinone which is most likely catalyzed by the NADPH dehydrogenase encoded by ver1. The last stages of DOTH biosynthesis are proposed to involve hydroxylation of the bisfuran. OrdB and norB might have oxidative roles here. An alternative possibility is that cytochrome P450 monoogenases such as avnA and cypX might perform these steps in addition to previously proposed steps. The chain is Putative epoxide hydrolase from Dothistroma septosporum (Red band needle blight fungus).